Consider the following 319-residue polypeptide: tRNA uridine(34) hydroxylase (319 aa).

The Rhodanese domain occupies 124 to 218 (LDEDTVILDA…YGKNEETKGE (95 aa)). Cys178 acts as the Cysteine persulfide intermediate in catalysis.

It belongs to the TrhO family.

It catalyses the reaction uridine(34) in tRNA + AH2 + O2 = 5-hydroxyuridine(34) in tRNA + A + H2O. Its function is as follows. Catalyzes oxygen-dependent 5-hydroxyuridine (ho5U) modification at position 34 in tRNAs. This Listeria monocytogenes serovar 1/2a (strain ATCC BAA-679 / EGD-e) protein is tRNA uridine(34) hydroxylase.